The chain runs to 563 residues: Arginine--tRNA ligase (563 aa).

The short motif at 120–130 (PNIAKPFHIGH) is the 'HIGH' region element.

This sequence belongs to the class-I aminoacyl-tRNA synthetase family. In terms of assembly, monomer.

It localises to the cytoplasm. It carries out the reaction tRNA(Arg) + L-arginine + ATP = L-arginyl-tRNA(Arg) + AMP + diphosphate. This Clostridium botulinum (strain Langeland / NCTC 10281 / Type F) protein is Arginine--tRNA ligase.